Consider the following 532-residue polypeptide: MEVGMVVVVAAKVLVSLWCVGACCLAAYLYRVVWVAPRRVLAEFRRQGIGGPRPSFPYGNLADMREAVAAARHQLAEARRRRRARDSGDGGSGAGIVHDYRPAVLPFYEKWRKDYGPIFTYSMGNVVFLHVSRPDVVRDINLCVSLDLGKSSYLKATHEPLFGGGILKSNGEAWAHQRKIIAREFFLDKVKGMVDLMVDSAQTLLKSWEEGIDKNGGTIDIKIDDDIRAYSADVISRTCFGSSYIKGKNIFLKIRELQKAVSKPNVLAEMTGLRFFPIKRNKQAWELHKQVHKLILEIVKESGEERNLLRAILLSASSSKVELAEAENFIVDNCKSIYFAGYESTAVTAAWCLMLLGLHPEWQDRVREEVQEVCAGQPVDSQSLQKMKNLTMVIQETLRLYPAGAFVSRQALQELKFGGVHIPKGVNIYIPVSTMHLDPNLWGPDVKEFNPERFSNAQPQLHSYLPFGAGARTCLGQGFAMAELKTLISLIISKFVLKLSPNYEHSPTLKLIVEPEFGVDLSLTRVQGAYRH.

At 1–2 (ME) the chain is on the lumenal side. Residues 3 to 23 (VGMVVVVAAKVLVSLWCVGAC) traverse the membrane as a helical; Signal-anchor for type III membrane protein segment. At 24–532 (CLAAYLYRVV…LTRVQGAYRH (509 aa)) the chain is on the cytoplasmic side. Cysteine 474 serves as a coordination point for heme.

Belongs to the cytochrome P450 family. The cofactor is heme. In terms of tissue distribution, highly expressed in shoot, spikelet and uppermost internode. Detected in roots, leaves and anthers.

Its subcellular location is the membrane. Catalyzes the 13-hydroxylation of gibberellins (GAs). Determines the ratio of GA4 and GA1. Converts GA12 into GA53. This chain is Cytochrome P450 714B2 (CYP714B2), found in Oryza sativa subsp. japonica (Rice).